A 427-amino-acid polypeptide reads, in one-letter code: Chaperone SurA (427 aa).

The first 13 residues, 1 to 13, serve as a signal peptide directing secretion; that stretch reads MLGVALLSGAVHA. PpiC domains are found at residues 164-265 and 275-374; these read SEEY…KLEE and RDEV…EVLG.

Its subcellular location is the periplasm. It carries out the reaction [protein]-peptidylproline (omega=180) = [protein]-peptidylproline (omega=0). Its function is as follows. Chaperone involved in the correct folding and assembly of outer membrane proteins. Recognizes specific patterns of aromatic residues and the orientation of their side chains, which are found more frequently in integral outer membrane proteins. May act in both early periplasmic and late outer membrane-associated steps of protein maturation. This Pseudomonas putida (strain ATCC 47054 / DSM 6125 / CFBP 8728 / NCIMB 11950 / KT2440) protein is Chaperone SurA.